The chain runs to 186 residues: Peptide deformylase (186 aa).

Fe cation-binding residues include Cys99 and His141. Residue Glu142 is part of the active site. His145 provides a ligand contact to Fe cation.

It belongs to the polypeptide deformylase family. Requires Fe(2+) as cofactor.

The catalysed reaction is N-terminal N-formyl-L-methionyl-[peptide] + H2O = N-terminal L-methionyl-[peptide] + formate. Functionally, removes the formyl group from the N-terminal Met of newly synthesized proteins. Requires at least a dipeptide for an efficient rate of reaction. N-terminal L-methionine is a prerequisite for activity but the enzyme has broad specificity at other positions. The sequence is that of Peptide deformylase from Chlamydia caviae (strain ATCC VR-813 / DSM 19441 / 03DC25 / GPIC) (Chlamydophila caviae).